Consider the following 77-residue polypeptide: Pi/alpha-stichotoxin-Hmg5b (77 aa).

Positions 1-21 (MDYQRLLFLFAVAMVITTTVA) are cleaved as a signal peptide. The propeptide occupies 22–34 (LPKDTALMDGQLQ). 3 cysteine pairs are disulfide-bonded: Cys40-Cys73, Cys42-Cys66, and Cys56-Cys74. Residue Met52 is modified to Methionine sulfoxide; partial.

Belongs to the sea anemone type 3 (BDS) potassium channel toxin family. Toxin occurs in two forms in the mucus, Hmg 1b-2 which is not oxidized and Hmg 1b-2 MetOx which is oxidized at Met-52.

It is found in the secreted. It localises to the nematocyst. Its function is as follows. The non-oxidized toxin is remarkably non-selective with activity on many different ion channels. Weakly and reversibly inhibits rat and human homomeric ASIC1 (isoform ASIC1a) (IC(50)=4.8 uM, and IC(50)=14.6 uM), and ASIC3 (IC(50)=15.9 uM). Molecular modeling interaction with ASIC1a suggests that this peptide hinders the collapse of acidic pockets and stabilizes nonconducting channels state. It activates several potassium channels including Kv1.1/KCNA1, Kv1.2/KCNA2, and drosophila Shaker IR. It moderately to potently inhibits potassium channels including Kv1.3/KCNA3, Kv1.4/KCNA4, Kv1.5/KCNA5, Kv1.6/KCNA6, Kv2.1/KCNB1, Kv4.2/KCND2, Kv7.1/KCNQ1, Kv7.2/Kv7.3 (KCNQ2/KCNQ3), Kv7.4/KCNQ4, hERG/KCNH2, and C.elegans QKT1. On sodium channels, it moderately to potently inhibits Nav1.1/SCN1A, Nav1.2/SCN2A, Nav1.3/SCN3A, Nav1.4/SCN4A, Nav1.5/SCN5A, Nav1.6/SCN8A, Nav1.7/SCN9A, Nav1.8/SCN10A, and B.germanica BgNav. It also moderately to potently inhibits Cav3.1/CACNA1G, Cav3.2/CACNA1H, and Cav3.3/CACNA1I. Significant shifts in the voltage-current relationship are observed on Kv and Nav, depending on the channel isoform, whereas the toxin does not seem to modulate the voltage-sensor domains of Cav channels, acting mainly as a pore blocker. Does not activate nicotinic acetylcholine receptors (nAChR), but potentiates ACh-elicited current of human alpha-7/CHRNA7 nAChR. Is also able to bind T.californica muscle-type nAChRs. In vivo, causes an excitatory effect in mice behavior. Also shows antihyperalgesic and analgesic activity in the acid-induced muscle pain mice model, and weak anti-inflammatory effect in models of acute local inflammation. Forms an oxidized toxin derivative (Hmg 1b-2 MetOx). Able to bind T.californica muscle-type nAChRs (alpha-1-beta-1-delta-epsilon (CHRNA1-CHRNB1-CHRND-CHRNE)). In Heteractis magnifica (Magnificent sea anemone), this protein is Pi/alpha-stichotoxin-Hmg5b.